The chain runs to 273 residues: DNA repair protein RecO (273 aa).

Positions 250–273 (NVGQNPSGKDDLNERRDVDGTGES) are disordered. Residues 257–273 (GKDDLNERRDVDGTGES) are compositionally biased toward basic and acidic residues.

It belongs to the RecO family.

Functionally, involved in DNA repair and RecF pathway recombination. The sequence is that of DNA repair protein RecO from Desulfitobacterium hafniense (strain DSM 10664 / DCB-2).